A 474-amino-acid chain; its full sequence is Zinc finger protein 230 (474 aa).

The KRAB domain maps to valine 8–serine 76. The KRNB stretch occupies residues threonine 80 to serine 167. 9 consecutive C2H2-type zinc fingers follow at residues histidine 168–histidine 190, serine 196–histidine 218, phenylalanine 224–histidine 246, tyrosine 252–histidine 274, phenylalanine 280–histidine 302, tyrosine 308–histidine 330, tyrosine 336–histidine 358, tyrosine 364–histidine 386, and tyrosine 392–histidine 414. A C2H2-type 10; atypical zinc finger spans residues phenylalanine 420–histidine 442.

It belongs to the krueppel C2H2-type zinc-finger protein family.

It is found in the nucleus. In terms of biological role, may be involved in transcriptional regulation. The protein is Zinc finger protein 230 (ZNF230) of Homo sapiens (Human).